The chain runs to 573 residues: Urease subunit alpha (573 aa).

The region spanning 136–573 (GAIDCHVHFI…LPMAQRYFLF (438 aa)) is the Urease domain. H141, H143, and K224 together coordinate Ni(2+). The residue at position 224 (K224) is an N6-carboxylysine. H226 contacts substrate. Ni(2+) is bound by residues H253 and H279. The active-site Proton donor is the H327. Residue D367 participates in Ni(2+) binding.

Belongs to the metallo-dependent hydrolases superfamily. Urease alpha subunit family. In terms of assembly, heterotrimer of UreA (gamma), UreB (beta) and UreC (alpha) subunits. Three heterotrimers associate to form the active enzyme. The cofactor is Ni cation. In terms of processing, carboxylation allows a single lysine to coordinate two nickel ions.

It is found in the cytoplasm. The enzyme catalyses urea + 2 H2O + H(+) = hydrogencarbonate + 2 NH4(+). The protein operates within nitrogen metabolism; urea degradation; CO(2) and NH(3) from urea (urease route): step 1/1. The polypeptide is Urease subunit alpha (Nocardia farcinica (strain IFM 10152)).